Here is a 318-residue protein sequence, read N- to C-terminus: Probable endolytic peptidoglycan transglycosylase RlpA (318 aa).

A signal peptide spans 1–21; sequence MMDKRVVAVAAVLWNVQMLFA. Residues 121 to 191 form a disordered region; it reads DPNAHASQQR…GVANTTDVPA (71 aa). Positions 125-137 are enriched in polar residues; it reads HASQQRNDRQTSP.

This sequence belongs to the RlpA family.

In terms of biological role, lytic transglycosylase with a strong preference for naked glycan strands that lack stem peptides. This Treponema pallidum (strain Nichols) protein is Probable endolytic peptidoglycan transglycosylase RlpA.